We begin with the raw amino-acid sequence, 411 residues long: Adenylosuccinate synthetase (411 aa).

GTP is bound by residues 11-17 (GDEGKGK) and 39-41 (GHT). The Proton acceptor role is filled by aspartate 12. Mg(2+) contacts are provided by aspartate 12 and glycine 39. IMP contacts are provided by residues 12–15 (DEGK), 37–40 (NAGH), threonine 121, arginine 135, glutamine 215, threonine 230, and arginine 294. Histidine 40 serves as the catalytic Proton donor. 290 to 296 (TTTKRPR) contacts substrate. GTP is bound by residues arginine 296, 322 to 324 (KLD), and 400 to 402 (STS).

The protein belongs to the adenylosuccinate synthetase family. Homodimer. Mg(2+) is required as a cofactor.

The protein localises to the cytoplasm. It catalyses the reaction IMP + L-aspartate + GTP = N(6)-(1,2-dicarboxyethyl)-AMP + GDP + phosphate + 2 H(+). The protein operates within purine metabolism; AMP biosynthesis via de novo pathway; AMP from IMP: step 1/2. Its function is as follows. Plays an important role in the de novo pathway of purine nucleotide biosynthesis. Catalyzes the first committed step in the biosynthesis of AMP from IMP. This chain is Adenylosuccinate synthetase, found in Helicobacter acinonychis (strain Sheeba).